The sequence spans 381 residues: Succinyl-diaminopimelate desuccinylase (381 aa).

A Zn(2+)-binding site is contributed by histidine 69. Residue aspartate 71 is part of the active site. Aspartate 103 is a binding site for Zn(2+). The active-site Proton acceptor is the glutamate 137. Residues glutamate 138, glutamate 166, and histidine 355 each coordinate Zn(2+).

Belongs to the peptidase M20A family. DapE subfamily. Homodimer. Requires Zn(2+) as cofactor. Co(2+) is required as a cofactor.

It carries out the reaction N-succinyl-(2S,6S)-2,6-diaminopimelate + H2O = (2S,6S)-2,6-diaminopimelate + succinate. The protein operates within amino-acid biosynthesis; L-lysine biosynthesis via DAP pathway; LL-2,6-diaminopimelate from (S)-tetrahydrodipicolinate (succinylase route): step 3/3. Its function is as follows. Catalyzes the hydrolysis of N-succinyl-L,L-diaminopimelic acid (SDAP), forming succinate and LL-2,6-diaminopimelate (DAP), an intermediate involved in the bacterial biosynthesis of lysine and meso-diaminopimelic acid, an essential component of bacterial cell walls. The polypeptide is Succinyl-diaminopimelate desuccinylase (Rickettsia africae (strain ESF-5)).